Consider the following 351-residue polypeptide: MEDSQETSPSSNNSSEELSSALHLSKGMSIFLDILRRADKNDDGKLSFEEFKAYFADGVLSGEELHELFHTIDTHNTNNLDTEELCEYFSQHLGEYENVLAALEDLNLSILKAMGKTKKDYQEASNLEQFVTRFLLKETLNQLQSLQNSLECAMETTEEQTRQERQGPAKPEVLSIQWPGKRSSRRVQRHNSFSPNSPQFNVSGPGLLEEDNQWMTQINRLQKLIDRLEKKDLKLEPPEEEIIEGNTKSHIMLVQRQMSVIEEDLEEFQLALKHYVESASSQSGCLRISIQKLSNESRYMIYEFWENSSVWNSHLQTNYSKTFQRSNVDFLETPELTSTMLVPASWWILNN.

Phosphoserine is present on serine 4. EF-hand domains follow at residues 26–61 (KGMS…GVLS) and 60–95 (LSGE…HLGE). Aspartate 39, asparagine 41, aspartate 43, lysine 45, and glutamate 50 together coordinate Ca(2+). The stretch at 135 to 163 (LLKETLNQLQSLQNSLECAMETTEEQTRQ) forms a coiled coil. The disordered stretch occupies residues 180-203 (GKRSSRRVQRHNSFSPNSPQFNVS). Over residues 190-202 (HNSFSPNSPQFNV) the composition is skewed to polar residues. Phosphoserine occurs at positions 192 and 197. A coiled-coil region spans residues 209–275 (EEDNQWMTQI…EEFQLALKHY (67 aa)). Residues 252–340 (MLVQRQMSVI…LETPELTSTM (89 aa)) enclose the ABM domain.

In terms of assembly, interacts with STX1. May interact with CPNE6. In terms of tissue distribution, expressed in brain (at protein level).

Its subcellular location is the cytoplasm. This chain is N-terminal EF-hand calcium-binding protein 1 (NECAB1), found in Homo sapiens (Human).